The chain runs to 347 residues: Ribosomal RNA large subunit methyltransferase M (347 aa).

S-adenosyl-L-methionine is bound by residues S184, 217-220, D236, D256, and D272; that span reads APGG. The active-site Proton acceptor is the K301.

This sequence belongs to the class I-like SAM-binding methyltransferase superfamily. RNA methyltransferase RlmE family. RlmM subfamily. As to quaternary structure, monomer.

Its subcellular location is the cytoplasm. The catalysed reaction is cytidine(2498) in 23S rRNA + S-adenosyl-L-methionine = 2'-O-methylcytidine(2498) in 23S rRNA + S-adenosyl-L-homocysteine + H(+). In terms of biological role, catalyzes the 2'-O-methylation at nucleotide C2498 in 23S rRNA. In Xanthomonas euvesicatoria pv. vesicatoria (strain 85-10) (Xanthomonas campestris pv. vesicatoria), this protein is Ribosomal RNA large subunit methyltransferase M.